A 577-amino-acid polypeptide reads, in one-letter code: CDPK-related kinase 7 (577 aa).

Residues 1-38 (MGLCHGKPIEQQSKNLPISNEIEETPKNSSQKAKSSGF) form a disordered region. A lipid anchor (N-myristoyl glycine) is attached at Gly2. Residues 124 to 386 (YEIDGEVGRG…AAQALCHPWL (263 aa)) enclose the Protein kinase domain. ATP-binding positions include 130-138 (VGRGHFGYT) and Lys156. Residue Asp252 is the Proton acceptor of the active site. The residue at position 292 (Ser292) is a Phosphoserine. Ser334 is modified (phosphoserine; by CPK1, CPK10 and CPK34). The autoinhibitory domain stretch occupies residues 391 to 421 (ELKIPSDMIIYKLVKVYIMSSSLRKSALAAL). The tract at residues 410–430 (SSSLRKSALAALAKTLTVPQL) is calmodulin binding (CaMBD). 4 EF-hand domains span residues 428–464 (PQLTYLQEQFNLLGPSKNGYISMQNYKTAILKSSTEA), 465–500 (TKDSRVLDFVHMISCLQYKKLDFEEFCASALSVYQL), 501–540 (EAMETWEQHARRAYELYEKDGNRVIMIEELATELGLGPSV), and 543–572 (HVVLQDWIRHSDGKLSFLGFVRLLHGVSSR). Residues Ser443, Asn445, Tyr447, Lys484, Glu489, Asp520, Asn522, Glu529, Asp554, and Lys556 each contribute to the Ca(2+) site. The residue at position 558 (Ser558) is a Phosphoserine.

The protein belongs to the protein kinase superfamily. Ser/Thr protein kinase family. CDPK subfamily. In terms of assembly, binds calmodulin (CaM) in a calcium-dependent manner. In terms of processing, autophosphorylated.

The protein resides in the membrane. It catalyses the reaction L-seryl-[protein] + ATP = O-phospho-L-seryl-[protein] + ADP + H(+). The enzyme catalyses L-threonyl-[protein] + ATP = O-phospho-L-threonyl-[protein] + ADP + H(+). Activated by calcium and calmodulin. Autophosphorylation may play an important role in the regulation of the kinase activity. Its function is as follows. May play a role in signal transduction pathways that involve calcium as a second messenger. The sequence is that of CDPK-related kinase 7 (CRK7) from Arabidopsis thaliana (Mouse-ear cress).